We begin with the raw amino-acid sequence, 205 residues long: SREBP regulating gene protein (205 aa).

The Cytoplasmic portion of the chain corresponds to 1 to 16; the sequence is MVNLAAMVWRRLLRKR. A helical membrane pass occupies residues 17 to 35; sequence WVLALVFGLSLVYFLSSTF. Over 36-205 the chain is Lumenal; that stretch reads KQEERAVRDR…GESPPELFPA (170 aa). Asn-67 is a glycosylation site (N-linked (GlcNAc...) asparagine).

The protein belongs to the SPRING family. As to quaternary structure, interacts with SCAP.

It localises to the golgi apparatus membrane. Functionally, positively regulates hepatic SREBP signaling pathway by modulating the proper localization of SCAP (SREBP cleavage-activating protein) to the endoplasmic reticulum, thereby controlling the level of functional SCAP. The chain is SREBP regulating gene protein from Homo sapiens (Human).